The primary structure comprises 272 residues: Cell wall synthesis protein Wag31 (272 aa).

2 disordered regions span residues 1–22 (MPLT…GKRG) and 62–109 (AARS…SEDT). The stretch at 30-67 (AFLDLVENELTRLIEENADLRQRVAELDQELAAARSGA) forms a coiled coil. 2 stretches are compositionally biased toward low complexity: residues 62–76 (AARS…ATSS) and 94–105 (VYEAPAQPAAPQ). Thr-74 is modified (phosphothreonine). Residues 139–206 (LSDARAQAEA…AERKHSEIMG (68 aa)) are a coiled coil. Residues 243–272 (ELGQRGSAAPVDSSANSDASGFGQFNRGNN) are disordered.

The protein belongs to the DivIVA family. In terms of assembly, forms homooligomers. Interacts with PbpB and CwsA. Phosphorylated by PknA.

It is found in the cytoplasm. Its function is as follows. Important for maintaining cell shape and cell wall integrity by localizing peptidoglycan synthesis to the cell poles. Protects PbpB (PBP3, FtsI) from oxidative stress-induced cleavage. This is Cell wall synthesis protein Wag31 (wag31) from Mycolicibacterium smegmatis (strain ATCC 700084 / mc(2)155) (Mycobacterium smegmatis).